The chain runs to 188 residues: MLLREIKDQTKQVVQEVLELSDLQKGQIFVLGLSSSEVIGGHIGKNSSLEVGEVVVETILEILDQKGIYLAVQGCEHLNRALVVERELAIQKDLEIVNVLPTLHAGGSGQLAAFKYMKDPVEVEFITAQAGVDIGDTAIGMHIKHVQVPIRPSLREIGQAHVTALASRPKLIGGVRAAYQEDEIRKGS.

It belongs to the UPF0340 family.

The protein is UPF0340 protein SSU98_0310 of Streptococcus suis (strain 98HAH33).